Reading from the N-terminus, the 1914-residue chain is Zinc finger protein Rlf (1914 aa).

Position 41 is a phosphoserine (Ser41). Residues 521–540 (KQYRRRDLTDQHKEKRDKKP) are compositionally biased toward basic and acidic residues. The segment at 521–541 (KQYRRRDLTDQHKEKRDKKPI) is disordered. Residues 582–604 (YTCPVCIKKFKRKEMFVPHVMEH) form a C2H2-type 1 zinc finger. Residue Lys622 forms a Glycyl lysine isopeptide (Lys-Gly) (interchain with G-Cter in SUMO2) linkage. Phosphoserine is present on residues Ser632 and Ser634. 5 C2H2-type zinc fingers span residues 671–696 (YPCP…KAEH), 714–736 (EKCT…EQVH), 742–766 (YMCV…KQKH), 771–795 (YKCE…EAQH), and 801–825 (YTCN…LSMH). Lys839 participates in a covalent cross-link: Glycyl lysine isopeptide (Lys-Gly) (interchain with G-Cter in SUMO2). A disordered region spans residues 882-907 (TETAENLKENSDSNSSDQLSHSSSAS). Over residues 893 to 907 (DSNSSDQLSHSSSAS) the composition is skewed to low complexity. Residues 954 to 979 (FTCGFDGCGSTYKNARGMQKHLRKVH) form a C2H2-type 7 zinc finger. The segment at 993–1028 (LFPSLGNEHNQTTEKLDAEPKPCSDTNSDSPDEGLD) is disordered. The segment covering 1003–1014 (QTTEKLDAEPKP) has biased composition (basic and acidic residues). C2H2-type zinc fingers lie at residues 1127 to 1152 (FFCE…LKKH) and 1172 to 1195 (FQCH…KNKH). The segment at 1231-1290 (LGGDPSSNSEKPHCHPKKDECSSETDLESSCEETESKTSDISSPIGSHREEQEGREGRGS) is disordered. Basic and acidic residues predominate over residues 1240–1251 (EKPHCHPKKDEC). Positions 1252–1263 (SSETDLESSCEE) are enriched in acidic residues. Over residues 1277–1289 (SHREEQEGREGRG) the composition is skewed to basic and acidic residues. C2H2-type zinc fingers lie at residues 1310–1335 (FHCI…RTVH), 1362–1387 (FACK…SDSH), 1407–1432 (FSCN…MEQH), 1444–1469 (IHCD…YYRH), and 1549–1574 (YPCM…KRTH). Residue Lys1423 forms a Glycyl lysine isopeptide (Lys-Gly) (interchain with G-Cter in SUMO2) linkage. Residues Lys1599 and Lys1611 each participate in a glycyl lysine isopeptide (Lys-Gly) (interchain with G-Cter in SUMO2) cross-link. The interval 1620-1654 (SERTEHSHSPGDSSAPIQNTDCCHSSERDGGQKGC) is disordered. Residues 1629 to 1642 (PGDSSAPIQNTDCC) are compositionally biased toward polar residues. A Glycyl lysine isopeptide (Lys-Gly) (interchain with G-Cter in SUMO2) cross-link involves residue Lys1696. The disordered stretch occupies residues 1725–1757 (ESETRQHSSGQENTVKNPTHVPKENFRKHSQPR). Polar residues predominate over residues 1731–1741 (HSSGQENTVKN). A Glycyl lysine isopeptide (Lys-Gly) (interchain with G-Cter in SUMO2) cross-link involves residue Lys1762. The segment at 1783–1807 (KEDDFDDWEPSEHLTLSNSSQSSND) is disordered. A compositionally biased stretch (polar residues) spans 1796-1807 (LTLSNSSQSSND).

It belongs to the krueppel C2H2-type zinc-finger protein family. Interacts with RIT1 and RIT2. In terms of tissue distribution, widely expressed in fetal and adult tissues.

It localises to the nucleus. In terms of biological role, may be involved in transcriptional regulation. The chain is Zinc finger protein Rlf (RLF) from Homo sapiens (Human).